A 391-amino-acid polypeptide reads, in one-letter code: Candidapepsin-1 (391 aa).

An N-terminal signal peptide occupies residues 1–18; the sequence is MFLKNIFIALAIALLVDA. The propeptide at 19 to 50 is activation peptide; the sequence is SPAKRSPGFVTLDFDVIKTPVNATGQEGKVKR. Residue N40 is glycosylated (N-linked (GlcNAc...) asparagine). Residues 64–377 enclose the Peptidase A1 domain; sequence YAADITIGSN…DLDDDKISLA (314 aa). D82 is a catalytic residue. C97 and C109 are joined by a disulfide. D267 is a catalytic residue. C305 and C343 are oxidised to a cystine.

This sequence belongs to the peptidase A1 family. O-glycosylated.

It is found in the secreted. The catalysed reaction is Preferential cleavage at the carboxyl of hydrophobic amino acids, but fails to cleave 15-Leu-|-Tyr-16, 16-Tyr-|-Leu-17 and 24-Phe-|-Phe-25 of insulin B chain. Activates trypsinogen, and degrades keratin.. In Candida albicans (strain WO-1) (Yeast), this protein is Candidapepsin-1 (SAP1).